We begin with the raw amino-acid sequence, 333 residues long: Homocysteine S-methyltransferase 2 (333 aa).

Residues Ser-8–Leu-327 enclose the Hcy-binding domain. Zn(2+) is bound by residues Cys-245, Cys-312, and Cys-313.

As to quaternary structure, monomer. The cofactor is Zn(2+). As to expression, expressed predominantly in roots. Expressed in rosette leaves, cauline leaves and developing seeds.

It catalyses the reaction S-methyl-L-methionine + L-homocysteine = 2 L-methionine + H(+). Catalyzes methyl transfer from S-methylmethionine (SMM) to adenosyl-L-homocysteine (AdoMet). SMM degradation (by HMT-1, HMT-2 and HMT-3) and biosynthesis (by MMT1) constitute the SMM cycle in plants, which is probably required to achieve short term control of AdoMet level. The polypeptide is Homocysteine S-methyltransferase 2 (HMT-2) (Arabidopsis thaliana (Mouse-ear cress)).